The primary structure comprises 456 residues: uncharacterized protein (456 aa).

The TRAM domain maps to 3–61; sequence LMRKNETREFLIEDIEFPAVGVAFYNDKKVYIKGAVPGQKVLARVSKVRREKIEAKLKE. [4Fe-4S] cluster-binding residues include C74, C80, C83, and C163. S-adenosyl-L-methionine-binding residues include Q289, Y318, E339, and D384. The active-site Nucleophile is the C411.

This sequence belongs to the class I-like SAM-binding methyltransferase superfamily. RNA M5U methyltransferase family.

This is an uncharacterized protein from Clostridium acetobutylicum (strain ATCC 824 / DSM 792 / JCM 1419 / IAM 19013 / LMG 5710 / NBRC 13948 / NRRL B-527 / VKM B-1787 / 2291 / W).